The primary structure comprises 117 residues: DNA-directed RNA polymerase subunit omega (117 aa).

Belongs to the RNA polymerase subunit omega family. In terms of assembly, the RNAP catalytic core consists of 2 alpha, 1 beta, 1 beta' and 1 omega subunit. When a sigma factor is associated with the core the holoenzyme is formed, which can initiate transcription.

It catalyses the reaction RNA(n) + a ribonucleoside 5'-triphosphate = RNA(n+1) + diphosphate. Its function is as follows. Promotes RNA polymerase assembly. Latches the N- and C-terminal regions of the beta' subunit thereby facilitating its interaction with the beta and alpha subunits. This Cereibacter sphaeroides (strain ATCC 17025 / ATH 2.4.3) (Rhodobacter sphaeroides) protein is DNA-directed RNA polymerase subunit omega.